Reading from the N-terminus, the 201-residue chain is Peptidyl-tRNA hydrolase (201 aa).

Tyrosine 14 serves as a coordination point for tRNA. The active-site Proton acceptor is histidine 19. 3 residues coordinate tRNA: tyrosine 64, asparagine 66, and asparagine 112.

This sequence belongs to the PTH family. Monomer.

Its subcellular location is the cytoplasm. The enzyme catalyses an N-acyl-L-alpha-aminoacyl-tRNA + H2O = an N-acyl-L-amino acid + a tRNA + H(+). Hydrolyzes ribosome-free peptidyl-tRNAs (with 1 or more amino acids incorporated), which drop off the ribosome during protein synthesis, or as a result of ribosome stalling. Functionally, catalyzes the release of premature peptidyl moieties from peptidyl-tRNA molecules trapped in stalled 50S ribosomal subunits, and thus maintains levels of free tRNAs and 50S ribosomes. The polypeptide is Peptidyl-tRNA hydrolase (Rhodopseudomonas palustris (strain BisB18)).